A 394-amino-acid chain; its full sequence is Aspergillopepsin-1 (394 aa).

The N-terminal stretch at 1-20 (MVVFSKTAALVLGLSTAVSA) is a signal peptide. A propeptide spans 21 to 69 (APAPTRKGFTINQIARPANKTRTVNLPGLYARSLAKFGGTVPQSVKEAA) (activation peptide). The region spanning 85–391 (YLTPVTVGKS…NSEGPKLGFA (307 aa)) is the Peptidase A1 domain. Residues aspartate 101 and aspartate 283 contribute to the active site. The cysteines at positions 319 and 354 are disulfide-linked.

Belongs to the peptidase A1 family.

Its subcellular location is the secreted. The catalysed reaction is Hydrolysis of proteins with broad specificity. Generally favors hydrophobic residues in P1 and P1', but also accepts Lys in P1, which leads to activation of trypsinogen. Does not clot milk.. In terms of biological role, secreted aspartic endopeptidase that allows assimilation of proteinaceous substrates. The scissile peptide bond is attacked by a nucleophilic water molecule activated by two aspartic residues in the active site. Shows a broad primary substrate specificity. Favors hydrophobic residues at the P1 and P1' positions, but also accepts a lysine residue in the P1 position, leading to the activation of trypsinogen and chymotrypsinogen A. In Aspergillus niger, this protein is Aspergillopepsin-1.